Here is a 282-residue protein sequence, read N- to C-terminus: Elongation factor Ts (282 aa).

Residues 80–83 (TDFV) form an involved in Mg(2+) ion dislocation from EF-Tu region.

This sequence belongs to the EF-Ts family.

Its subcellular location is the cytoplasm. In terms of biological role, associates with the EF-Tu.GDP complex and induces the exchange of GDP to GTP. It remains bound to the aminoacyl-tRNA.EF-Tu.GTP complex up to the GTP hydrolysis stage on the ribosome. This is Elongation factor Ts (tsf) from Chlamydia pneumoniae (Chlamydophila pneumoniae).